The chain runs to 661 residues: Translation factor GUF1 homolog, mitochondrial (661 aa).

The 184-residue stretch at 59 to 242 (ENIRNFCIVA…AIIDRIPSPK (184 aa)) folds into the tr-type G domain. GTP contacts are provided by residues 68-75 (AHVDHGKS), 135-139 (DTPGH), and 189-192 (NKVD).

This sequence belongs to the TRAFAC class translation factor GTPase superfamily. Classic translation factor GTPase family. LepA subfamily.

It localises to the mitochondrion inner membrane. The catalysed reaction is GTP + H2O = GDP + phosphate + H(+). In terms of biological role, promotes mitochondrial protein synthesis. May act as a fidelity factor of the translation reaction, by catalyzing a one-codon backward translocation of tRNAs on improperly translocated ribosomes. Binds to mitochondrial ribosomes in a GTP-dependent manner. The chain is Translation factor GUF1 homolog, mitochondrial from Ixodes scapularis (Black-legged tick).